Here is a 193-residue protein sequence, read N- to C-terminus: Ion-translocating oxidoreductase complex subunit A (193 aa).

A run of 6 helical transmembrane segments spans residues 5 to 25 (LLLF…FLGL), 47 to 67 (FVMT…LIPL), 72 to 92 (LRTM…EMVV), 102 to 122 (LLGI…VALL), 134 to 154 (ALYG…FAAI), and 171 to 191 (AIAL…SGLV).

Belongs to the NqrDE/RnfAE family. The complex is composed of six subunits: RsxA, RsxB, RsxC, RsxD, RsxE and RsxG.

It localises to the cell inner membrane. Its function is as follows. Part of a membrane-bound complex that couples electron transfer with translocation of ions across the membrane. Required to maintain the reduced state of SoxR. This is Ion-translocating oxidoreductase complex subunit A from Escherichia coli O45:K1 (strain S88 / ExPEC).